The chain runs to 114 residues: Cytochrome c2 (114 aa).

Pyrrolidone carboxylic acid is present on glutamine 1. Residues cysteine 13, cysteine 16, histidine 17, and methionine 93 each coordinate heme c.

This sequence belongs to the cytochrome c family. In terms of processing, binds 1 heme c group covalently per subunit.

It localises to the periplasm. Its function is as follows. Cytochrome c2 is found mainly in purple, non-sulfur, photosynthetic bacteria where it functions as the electron donor to the oxidized bacteriochlorophyll in the photophosphorylation pathway. However, it may also have a role in the respiratory chain and is found in some non-photosynthetic bacteria. The chain is Cytochrome c2 from Rhodopseudomonas palustris.